Reading from the N-terminus, the 116-residue chain is Large ribosomal subunit protein bL19 (116 aa).

This sequence belongs to the bacterial ribosomal protein bL19 family.

Its function is as follows. This protein is located at the 30S-50S ribosomal subunit interface and may play a role in the structure and function of the aminoacyl-tRNA binding site. This chain is Large ribosomal subunit protein bL19, found in Pseudomonas putida (strain ATCC 700007 / DSM 6899 / JCM 31910 / BCRC 17059 / LMG 24140 / F1).